The following is a 154-amino-acid chain: PTS system fructose-specific EIIA component (154 aa).

Residues 8-152 (TITPLELISL…QTVQDVLAEV (145 aa)) form the PTS EIIA type-2 domain. The active-site Tele-phosphohistidine intermediate is the His-70. His-70 carries the post-translational modification Phosphohistidine; by HPr.

The protein resides in the cytoplasm. In terms of biological role, the phosphoenolpyruvate-dependent sugar phosphotransferase system (sugar PTS), a major carbohydrate active transport system, catalyzes the phosphorylation of incoming sugar substrates concomitantly with their translocation across the cell membrane. The enzyme II PtfABC PTS system is involved in fructose transport. This is PTS system fructose-specific EIIA component from Haloferax volcanii (strain ATCC 29605 / DSM 3757 / JCM 8879 / NBRC 14742 / NCIMB 2012 / VKM B-1768 / DS2) (Halobacterium volcanii).